Here is a 1439-residue protein sequence, read N- to C-terminus: Myomesin-3 (1439 aa).

The tract at residues 1–57 is disordered; the sequence is MTLPHSPGSAGEPQASQTVQVHRLEHRQEEEQKEERQHSLQMGSSVQRRTYRSSEEE. The span at 22–38 shows a compositional bias: basic and acidic residues; the sequence is HRLEHRQEEEQKEERQH. Residues 39 to 48 show a composition bias toward polar residues; the sequence is SLQMGSSVQR. Positions 119–149 form a coiled coil; sequence QRLLRQRRDWKALRQRTEEKVREAKELIELC. Ig-like C2-type domains follow at residues 154-246 and 269-362; these read PWFW…AKVL and PSAE…AYVF. 5 Fibronectin type-III domains span residues 376–471, 504–599, 605–698, 704–799, and 806–901; these read SPLN…TGDY, APTN…LKGK, PPAQ…VKQA, APYD…CKEW, and PPYD…LEDK. 2 consecutive Ig-like C2-type domains span residues 1122–1207 and 1336–1425; these read PYFQ…LDLT and AKVV…VTIS.

Homodimer. In terms of tissue distribution, mainly expressed in slow muscle, extraocular muscle and embryonic/neonatal skeletal muscle (at protein level). Expression in skeletal muscle is fiber type specific, with the highest levels in type IIA fibers (intermediate speed) and lower levels in type I fibers.

Its subcellular location is the cytoplasm. The protein resides in the myofibril. The protein localises to the sarcomere. It is found in the m line. Its function is as follows. May link the intermediate filament cytoskeleton to the M-disk of the myofibrils in striated muscle. This is Myomesin-3 (Myom3) from Mus musculus (Mouse).